Consider the following 355-residue polypeptide: tRNA-specific 2-thiouridylase MnmA (355 aa).

Residues A6–S13 and M32 contribute to the ATP site. Catalysis depends on C93, which acts as the Nucleophile. A disulfide bridge links C93 with C191. Position 117 (G117) interacts with ATP. Residues K140–Q142 form an interaction with tRNA region. C191 acts as the Cysteine persulfide intermediate in catalysis. Positions R296–Y297 are interaction with tRNA.

It belongs to the MnmA/TRMU family.

It is found in the cytoplasm. It catalyses the reaction S-sulfanyl-L-cysteinyl-[protein] + uridine(34) in tRNA + AH2 + ATP = 2-thiouridine(34) in tRNA + L-cysteinyl-[protein] + A + AMP + diphosphate + H(+). Functionally, catalyzes the 2-thiolation of uridine at the wobble position (U34) of tRNA, leading to the formation of s(2)U34. The polypeptide is tRNA-specific 2-thiouridylase MnmA (Pelobacter propionicus (strain DSM 2379 / NBRC 103807 / OttBd1)).